The following is a 462-amino-acid chain: Glutamate--tRNA ligase (462 aa).

A 'HIGH' region motif is present at residues 11–21; the sequence is PSPTGFIHLGN. Positions 120 to 131 are enriched in basic and acidic residues; the sequence is KPRYDGTWRPEP. A disordered region spans residues 120 to 140; that stretch reads KPRYDGTWRPEPGKTLPPIPA. A 'KMSKS' region motif is present at residues 243-247; the sequence is KMSKR. K246 serves as a coordination point for ATP.

It belongs to the class-I aminoacyl-tRNA synthetase family. Glutamate--tRNA ligase type 1 subfamily. As to quaternary structure, monomer.

It is found in the cytoplasm. The enzyme catalyses tRNA(Glu) + L-glutamate + ATP = L-glutamyl-tRNA(Glu) + AMP + diphosphate. Catalyzes the attachment of glutamate to tRNA(Glu) in a two-step reaction: glutamate is first activated by ATP to form Glu-AMP and then transferred to the acceptor end of tRNA(Glu). In Polaromonas sp. (strain JS666 / ATCC BAA-500), this protein is Glutamate--tRNA ligase.